The following is a 202-amino-acid chain: Orotate phosphoribosyltransferase (202 aa).

113-121 contributes to the 5-phospho-alpha-D-ribose 1-diphosphate binding site; the sequence is EDIITTGGS. Residues threonine 117 and arginine 145 each coordinate orotate.

This sequence belongs to the purine/pyrimidine phosphoribosyltransferase family. PyrE subfamily. In terms of assembly, homodimer. Requires Mg(2+) as cofactor.

It carries out the reaction orotidine 5'-phosphate + diphosphate = orotate + 5-phospho-alpha-D-ribose 1-diphosphate. It functions in the pathway pyrimidine metabolism; UMP biosynthesis via de novo pathway; UMP from orotate: step 1/2. Catalyzes the transfer of a ribosyl phosphate group from 5-phosphoribose 1-diphosphate to orotate, leading to the formation of orotidine monophosphate (OMP). In Campylobacter lari (strain RM2100 / D67 / ATCC BAA-1060), this protein is Orotate phosphoribosyltransferase.